An 822-amino-acid chain; its full sequence is ATP-dependent zinc metalloprotease FTSH 7, chloroplastic (822 aa).

Composition is skewed to low complexity over residues 1–34 (MASA…RRAS), 80–94 (AEAS…SSSG), and 101–122 (AAAA…AAAT). Disordered regions lie at residues 1–44 (MASA…ASVR) and 67–136 (PAAR…ENKW). A chloroplast-targeting transit peptide spans 1–70 (MASASAAAET…RVLRRPPAAR (70 aa)). Helical transmembrane passes span 154–174 (IVQG…IFAL) and 288–308 (GGLL…AVVL). 386–393 (GLPGTGKT) lines the ATP pocket. His-611 contributes to the Zn(2+) binding site. Glu-612 is a catalytic residue. Residues His-615 and Asp-694 each contribute to the Zn(2+) site.

The protein in the N-terminal section; belongs to the AAA ATPase family. This sequence in the C-terminal section; belongs to the peptidase M41 family. The cofactor is Zn(2+).

Its subcellular location is the plastid. The protein localises to the chloroplast thylakoid membrane. Probable ATP-dependent zinc metallopeptidase. The polypeptide is ATP-dependent zinc metalloprotease FTSH 7, chloroplastic (FTSH7) (Oryza sativa subsp. japonica (Rice)).